The primary structure comprises 468 residues: ATP-dependent protease ATPase subunit HslU (468 aa).

Residues V22 and G64–E69 each bind ATP. The tract at residues F166–E187 is disordered. Over residues N169–T178 the composition is skewed to acidic residues. ATP is bound by residues D281, E346, and R418.

The protein belongs to the ClpX chaperone family. HslU subfamily. A double ring-shaped homohexamer of HslV is capped on each side by a ring-shaped HslU homohexamer. The assembly of the HslU/HslV complex is dependent on binding of ATP.

The protein localises to the cytoplasm. Its function is as follows. ATPase subunit of a proteasome-like degradation complex; this subunit has chaperone activity. The binding of ATP and its subsequent hydrolysis by HslU are essential for unfolding of protein substrates subsequently hydrolyzed by HslV. HslU recognizes the N-terminal part of its protein substrates and unfolds these before they are guided to HslV for hydrolysis. The sequence is that of ATP-dependent protease ATPase subunit HslU from Staphylococcus carnosus (strain TM300).